Reading from the N-terminus, the 553-residue chain is Copine-9 (553 aa).

C2 domains are found at residues 1 to 125 (MSLS…ERPL) and 132 to 255 (KCGT…FTVY). Residues Asp163, Asp169, Asp225, Asp227, and Asp233 each coordinate Ca(2+). A VWFA domain is found at 299-500 (NFTVAIDFTA…VQFVPFRDYV (202 aa)). The disordered stretch occupies residues 531 to 553 (TRDIQPRPPPPVSPNPTPAPEQP). Positions 536 to 553 (PRPPPPVSPNPTPAPEQP) are enriched in pro residues.

It belongs to the copine family. The cofactor is Ca(2+).

Its function is as follows. Probable calcium-dependent phospholipid-binding protein that may play a role in calcium-mediated intracellular processes. Plays a role in dendrite formation by melanocytes. The sequence is that of Copine-9 from Mus musculus (Mouse).